Here is a 330-residue protein sequence, read N- to C-terminus: Tryptophan--tRNA ligase (330 aa).

Residues 9–11 (QPT) and 17–18 (GN) each bind ATP. Residues 10 to 18 (PTGDPHIGN) carry the 'HIGH' region motif. Aspartate 136 provides a ligand contact to L-tryptophan. Residues 148–150 (GED), isoleucine 187, and 195–199 (KMSKS) contribute to the ATP site. The short motif at 195 to 199 (KMSKS) is the 'KMSKS' region element.

The protein belongs to the class-I aminoacyl-tRNA synthetase family. In terms of assembly, homodimer.

It is found in the cytoplasm. The catalysed reaction is tRNA(Trp) + L-tryptophan + ATP = L-tryptophyl-tRNA(Trp) + AMP + diphosphate + H(+). Catalyzes the attachment of tryptophan to tRNA(Trp). This is Tryptophan--tRNA ligase from Deinococcus radiodurans (strain ATCC 13939 / DSM 20539 / JCM 16871 / CCUG 27074 / LMG 4051 / NBRC 15346 / NCIMB 9279 / VKM B-1422 / R1).